The sequence spans 360 residues: Ribosomal RNA large subunit methyltransferase M (360 aa).

Residues S187, 220-223, D239, D259, and D276 each bind S-adenosyl-L-methionine; that span reads CPGG. K305 serves as the catalytic Proton acceptor.

Belongs to the class I-like SAM-binding methyltransferase superfamily. RNA methyltransferase RlmE family. RlmM subfamily. As to quaternary structure, monomer.

The protein resides in the cytoplasm. It catalyses the reaction cytidine(2498) in 23S rRNA + S-adenosyl-L-methionine = 2'-O-methylcytidine(2498) in 23S rRNA + S-adenosyl-L-homocysteine + H(+). Its function is as follows. Catalyzes the 2'-O-methylation at nucleotide C2498 in 23S rRNA. The sequence is that of Ribosomal RNA large subunit methyltransferase M from Shewanella pealeana (strain ATCC 700345 / ANG-SQ1).